The primary structure comprises 170 residues: Acireductone dioxygenase (170 aa).

Residues H99, H101, E105, and H144 each contribute to the Fe(2+) site. Ni(2+) contacts are provided by H99, H101, E105, and H144.

The protein belongs to the acireductone dioxygenase (ARD) family. Monomer. Fe(2+) is required as a cofactor. Ni(2+) serves as cofactor.

The catalysed reaction is 1,2-dihydroxy-5-(methylsulfanyl)pent-1-en-3-one + O2 = 3-(methylsulfanyl)propanoate + CO + formate + 2 H(+). It carries out the reaction 1,2-dihydroxy-5-(methylsulfanyl)pent-1-en-3-one + O2 = 4-methylsulfanyl-2-oxobutanoate + formate + 2 H(+). The protein operates within amino-acid biosynthesis; L-methionine biosynthesis via salvage pathway; L-methionine from S-methyl-5-thio-alpha-D-ribose 1-phosphate: step 5/6. Functionally, catalyzes 2 different reactions between oxygen and the acireductone 1,2-dihydroxy-3-keto-5-methylthiopentene (DHK-MTPene) depending upon the metal bound in the active site. Fe-containing acireductone dioxygenase (Fe-ARD) produces formate and 2-keto-4-methylthiobutyrate (KMTB), the alpha-ketoacid precursor of methionine in the methionine recycle pathway. Ni-containing acireductone dioxygenase (Ni-ARD) produces methylthiopropionate, carbon monoxide and formate, and does not lie on the methionine recycle pathway. The chain is Acireductone dioxygenase from Bacillus anthracis.